The sequence spans 400 residues: Canavanine gamma-lyase (400 aa).

The residue at position 213 (Lys213) is an N6-(pyridoxal phosphate)lysine.

This sequence belongs to the trans-sulfuration enzymes family. It depends on pyridoxal 5'-phosphate as a cofactor.

The catalysed reaction is L-canavanine + H2O = N-hydroxyguanidine + L-homoserine. Functionally, lyase involved in the degradation of canavanine, the delta-oxa-analog of arginine, allowing growth on canavanine as sole nitrogen and carbon source. Catalyzes the elimination of hydroxyguanidine from canavanine with a subsequent water addition to yield homoserine. Is highly specific for canavanine and cannot use methionine, cystathionine or arginine. This chain is Canavanine gamma-lyase, found in Pseudomonas canavaninivorans.